The chain runs to 314 residues: Dihydropteroate synthase (314 aa).

In terms of domain architecture, Pterin-binding spans 10–294 (TVICGIINVT…DVASHRMAVE (285 aa)). Asn-17 serves as a coordination point for Mg(2+). (7,8-dihydropterin-6-yl)methyl diphosphate contacts are provided by residues Thr-57, Asp-91, Asn-110, Asp-201, Lys-237, and 282–284 (RVH).

It belongs to the DHPS family. As to quaternary structure, homodimer or homotrimer. Mg(2+) is required as a cofactor.

It carries out the reaction (7,8-dihydropterin-6-yl)methyl diphosphate + 4-aminobenzoate = 7,8-dihydropteroate + diphosphate. Its pathway is cofactor biosynthesis; tetrahydrofolate biosynthesis; 7,8-dihydrofolate from 2-amino-4-hydroxy-6-hydroxymethyl-7,8-dihydropteridine diphosphate and 4-aminobenzoate: step 1/2. Catalyzes the condensation of para-aminobenzoate (pABA) with 6-hydroxymethyl-7,8-dihydropterin diphosphate (DHPt-PP) to form 7,8-dihydropteroate (H2Pte), the immediate precursor of folate derivatives. The chain is Dihydropteroate synthase (sulA) from Streptococcus pneumoniae serotype 4 (strain ATCC BAA-334 / TIGR4).